Here is a 767-residue protein sequence, read N- to C-terminus: Transferrin receptor protein 1 (767 aa).

The Cytoplasmic portion of the chain corresponds to 1-67 (MDQARSAFSN…LTKPKRFNGS (67 aa)). 2 positions are modified to phosphoserine: Ser-9 and Ser-18. Position 19 is a phosphotyrosine (Tyr-19). Residues 19–22 (YTRF) carry the Endocytosis signal motif. Position 20 is a phosphothreonine (Thr-20). Phosphoserine is present on Ser-23. The Stop-transfer sequence signature appears at 60–63 (KPKR). Residues 68-88 (FCYAVIAVIIFFLIGFMIGYL) traverse the membrane as a helical; Signal-anchor for type II membrane protein segment. Cys-69 is lipidated: S-palmitoyl cysteine. Topologically, residues 89 to 767 (GYCKRVEPKS…GDIWDIDNEF (679 aa)) are extracellular. Residues 96 to 110 (PKSECGRSGDSKEIE) show a composition bias toward basic and acidic residues. Residues 96–122 (PKSECGRSGDSKEIEGTEPPETEEYFP) are disordered. Over residues 111-121 (GTEPPETEEYF) the composition is skewed to acidic residues. Residues Asn-211, Asn-258, and Asn-324 are each glycosylated (N-linked (GlcNAc...) asparagine). Residues 230–320 (SKATTVTGKL…GTGDPYTPGF (91 aa)) form the PA domain. The ligand-binding stretch occupies residues 576–767 (TMDTYEVLSQ…GDIWDIDNEF (192 aa)). Residues 653–655 (RGD) carry the Cell attachment site motif. A glycan (N-linked (GlcNAc...) asparagine) is linked at Asn-734.

The protein belongs to the peptidase M28 family. M28B subfamily. In terms of assembly, homodimer; disulfide-linked. Binds one transferrin or HFE molecule per subunit. Interacts with SH3BP4. Interacts with STEAP3; facilitates TFRC endocytosis in erythroid precursor cells. In terms of processing, stearoylated by ZDHHC6 which inhibits TFRC-mediated activation of the JNK pathway and promotes mitochondrial fragmentation. Stearoylation does not affect iron uptake.

The protein resides in the cell membrane. It localises to the melanosome. Cellular uptake of iron occurs via receptor-mediated endocytosis of ligand-occupied transferrin receptor into specialized endosomes. Endosomal acidification leads to iron release. The apotransferrin-receptor complex is then recycled to the cell surface with a return to neutral pH and the concomitant loss of affinity of apotransferrin for its receptor. Transferrin receptor is necessary for development of erythrocytes and the nervous system. Positively regulates T and B cell proliferation through iron uptake. Acts as a lipid sensor that regulates mitochondrial fusion by regulating activation of the JNK pathway. When dietary levels of stearate (C18:0) are low, promotes activation of the JNK pathway, resulting in HUWE1-mediated ubiquitination and subsequent degradation of the mitofusin MFN2 and inhibition of mitochondrial fusion. When dietary levels of stearate (C18:0) are high, TFRC stearoylation inhibits activation of the JNK pathway and thus degradation of the mitofusin MFN2. Mediates uptake of NICOL1 into fibroblasts where it may regulate extracellular matrix production. This chain is Transferrin receptor protein 1 (TFRC), found in Equus caballus (Horse).